We begin with the raw amino-acid sequence, 102 residues long: Citrate lyase acyl carrier protein (102 aa).

S14 is modified (O-(phosphoribosyl dephospho-coenzyme A)serine).

Belongs to the CitD family. As to quaternary structure, oligomer with a subunit composition of (alpha,beta,gamma)6.

It localises to the cytoplasm. Covalent carrier of the coenzyme of citrate lyase. The chain is Citrate lyase acyl carrier protein from Streptococcus pyogenes serotype M4 (strain MGAS10750).